Reading from the N-terminus, the 195-residue chain is SPbeta prophage-derived uncharacterized protein YotM (195 aa).

This chain is SPbeta prophage-derived uncharacterized protein YotM (yotM), found in Bacillus subtilis (strain 168).